A 312-amino-acid chain; its full sequence is uncharacterized protein (312 aa).

This sequence belongs to the asfivirus CP312R family.

The protein resides in the virion. This is an uncharacterized protein from African swine fever virus (isolate Tick/South Africa/Pretoriuskop Pr4/1996) (ASFV).